The primary structure comprises 319 residues: DNA-directed RNA polymerase subunit alpha (319 aa).

The interval 1–227 (MKEFIFPMKI…KHMNMLTNIS (227 aa)) is alpha N-terminal domain (alpha-NTD). An alpha C-terminal domain (alpha-CTD) region spans residues 242–319 (LMEKLTFSIE…NIGEQRSSEV (78 aa)).

The protein belongs to the RNA polymerase alpha chain family. Homodimer. The RNAP catalytic core consists of 2 alpha, 1 beta, 1 beta' and 1 omega subunit. When a sigma factor is associated with the core the holoenzyme is formed, which can initiate transcription.

The catalysed reaction is RNA(n) + a ribonucleoside 5'-triphosphate = RNA(n+1) + diphosphate. DNA-dependent RNA polymerase catalyzes the transcription of DNA into RNA using the four ribonucleoside triphosphates as substrates. The sequence is that of DNA-directed RNA polymerase subunit alpha from Hydrogenobaculum sp. (strain Y04AAS1).